A 213-amino-acid polypeptide reads, in one-letter code: Protein FAM177A1 (213 aa).

Residue Met1 is modified to N-acetylmethionine. Ser70 bears the Phosphoserine mark. Phosphothreonine is present on Thr71. The stretch at 136-173 (IDEYYRMKKEEEEEEEENRMSEEAEKQYQQNKLQTDSI) forms a coiled coil. Residues 147-175 (EEEEEENRMSEEAEKQYQQNKLQTDSIVQ) are disordered. Over residues 162-175 (QYQQNKLQTDSIVQ) the composition is skewed to polar residues.

The protein belongs to the FAM177 family.

The polypeptide is Protein FAM177A1 (FAM177A1) (Homo sapiens (Human)).